The primary structure comprises 431 residues: Putative serine/threonine-protein kinase B (431 aa).

A Protein kinase domain is found at 20–279; sequence YLNKGIVGLG…VRENFQIPYI (260 aa). Residues 26–34 and K49 contribute to the ATP site; that span reads VGLGSYGEG. D147 (proton acceptor) is an active-site residue. A PH domain is found at 331–429; that stretch reads DVTHRGHVNK…WVHAIQRGIG (99 aa).

This sequence belongs to the protein kinase superfamily. Ser/Thr protein kinase family.

The catalysed reaction is L-seryl-[protein] + ATP = O-phospho-L-seryl-[protein] + ADP + H(+). The enzyme catalyses L-threonyl-[protein] + ATP = O-phospho-L-threonyl-[protein] + ADP + H(+). The polypeptide is Putative serine/threonine-protein kinase B (NRKB) (Trypanosoma brucei brucei).